The chain runs to 479 residues: Citrate synthase, mitochondrial (479 aa).

Residues 1–37 (MSAILSTTSKSFLSRGSTRQCQNMQKALFALLNARHY) constitute a mitochondrion transit peptide. Active-site residues include histidine 312, histidine 358, and aspartate 413. Serine 462 bears the Phosphoserine mark.

Belongs to the citrate synthase family. In terms of assembly, monomer and homodimer. Exists as an inactive monomer when phosphorylated. Homodimerization is dependent on dephosphorylation of Ser-462 by PTC7 and is required for activity. In terms of processing, phosphorylation at Ser-462. Dephosphorylated at Ser-462 by PTC7.

It is found in the mitochondrion matrix. It catalyses the reaction oxaloacetate + acetyl-CoA + H2O = citrate + CoA + H(+). It functions in the pathway carbohydrate metabolism; tricarboxylic acid cycle; isocitrate from oxaloacetate: step 1/2. With respect to regulation, phosphorylation at Ser-462 inhibits catalytic activity. Dephosphorylation at Ser-462 by PTC7 enhances catalytic activity. Its function is as follows. Specific citrate synthase with catalytic activity only with acetyl-CoA. This is Citrate synthase, mitochondrial from Saccharomyces cerevisiae (strain ATCC 204508 / S288c) (Baker's yeast).